The chain runs to 612 residues: Baculoviral IAP repeat-containing protein 2 (612 aa).

One copy of the BIR 1 repeat lies at 46-113; it reads ELYRMSTYSA…RQFYPSCSFV (68 aa). Arg-143 bears the Omega-N-methylarginine mark. The residue at position 153 (Ser-153) is a Phosphoserine. BIR repeat units lie at residues 177-243 and 262-329; these read EEAR…CPFL and HSAR…CEFL. Residues Cys-299, Cys-302, His-319, and Cys-326 each contribute to the Zn(2+) site. The CARD domain occupies 447–537; sequence MASGDLSLIR…TLYENLFVEK (91 aa). The RING-type zinc-finger motif lies at 565-600; it reads CKVCMDREVSIVFIPCGHLVVCQECAPSLRKCPICR.

The protein belongs to the IAP family. Interacts with DIABLO/SMAC and with PRSS25; these interactions inhibit apoptotic suppressor activity. Interacts with CASP9. Interacts (via BIR domains) with TRAF2; the interaction is required for IKBKE ubiquitination. Interacts with E2F1, RIPK1, RIPK2, RIPK3, RIPK4, BIRC5/survivin and USP19. Interacts with HSP90AB1. Interacts with several death receptors, inclusing FAS, TNFRSF10A and TNFRSF10B. Recruited to TNFRSF10B in the absence of receptor stimulation. When TNFRSF10B is stimulated, further recruited to the receptor and cleaved by caspases. Proteolytic fragments remain associated with TNFRSF10B. In terms of processing, auto-ubiquitinated and degraded by the proteasome in apoptotic cells. Post-translationally, upon stimulation of death receptors, including TNFRSF10B, recruited to receptors and cleaved by caspases. Proteolytic fragments remain associated with the receptors. This cleavage presumably inactivates the protein. As to expression, expressed in heart, brain, spleen, lung, liver, skeletal muscle, kidney and testis.

The protein resides in the cytoplasm. It localises to the nucleus. It carries out the reaction S-ubiquitinyl-[E2 ubiquitin-conjugating enzyme]-L-cysteine + [acceptor protein]-L-lysine = [E2 ubiquitin-conjugating enzyme]-L-cysteine + N(6)-ubiquitinyl-[acceptor protein]-L-lysine.. The CARD domain inhibits the activation of E3 ubiquitin ligase activity by preventing RING domain dimerization and E2 ubiquitin donor binding and activation. The CARD domain-mediated autoinhibition of the E3 ubiquitin-protein ligase activity suppresses cell proliferation and migration. USP19 regulates the stability of BIRC2/c-IAP1 by preventing its ubiquitination. Functionally, multi-functional protein which regulates not only caspases and apoptosis, but also modulates inflammatory signaling and immunity, mitogenic kinase signaling, and cell proliferation, as well as cell invasion and metastasis. Acts as an E3 ubiquitin-protein ligase regulating NF-kappa-B signaling and regulates both canonical and non-canonical NF-kappa-B signaling by acting in opposite directions: acts as a positive regulator of the canonical pathway and suppresses constitutive activation of non-canonical NF-kappa-B signaling. The target proteins for its E3 ubiquitin-protein ligase activity include: RIPK1, RIPK2, RIPK3, RIPK4, CASP3, CASP7, CASP8, TRAF2, DIABLO/SMAC, MAP3K14/NIK, MAP3K5/ASK1, IKBKG/NEMO, IKBKE and MXD1/MAD1. Can also function as an E3 ubiquitin-protein ligase of the NEDD8 conjugation pathway, targeting effector caspases for neddylation and inactivation. Acts as an important regulator of innate immune signaling via regulation of Toll-like receptors (TLRs), Nodlike receptors (NLRs) and RIG-I like receptors (RLRs), collectively referred to as pattern recognition receptors (PRRs). Protects cells from spontaneous formation of the ripoptosome, a large multi-protein complex that has the capability to kill cancer cells in a caspase-dependent and caspase-independent manner. Suppresses ripoptosome formation by ubiquitinating RIPK1 and CASP8. Can stimulate the transcriptional activity of E2F1. Plays a role in the modulation of the cell cycle. This Mus musculus (Mouse) protein is Baculoviral IAP repeat-containing protein 2 (Birc2).